The primary structure comprises 245 residues: tRNA (guanine-N(1)-)-methyltransferase (245 aa).

S-adenosyl-L-methionine-binding positions include G111 and 131 to 136; that span reads MGDYVL.

The protein belongs to the RNA methyltransferase TrmD family. In terms of assembly, homodimer.

Its subcellular location is the cytoplasm. It carries out the reaction guanosine(37) in tRNA + S-adenosyl-L-methionine = N(1)-methylguanosine(37) in tRNA + S-adenosyl-L-homocysteine + H(+). Specifically methylates guanosine-37 in various tRNAs. The protein is tRNA (guanine-N(1)-)-methyltransferase of Staphylococcus aureus (strain Mu3 / ATCC 700698).